The following is a 957-amino-acid chain: MSQLPSLSQLRDPHAFLRRHLGPDAAEQQAMLDSLGLGSRVELIEQTVPPGIRLNRELDLPPALDEQAALARLRGYAEQNQVWTSLIGMGYHGTLTPTVILRNVLENPGWYTAYTPYQPEIAQGRLEALLNFQQLTIDLTGLELANASLLDEATAAAEAMALAKRVAKSKSNLFFVDENCHPQTISVVQTRAEGFGFELIVDAVDNLKQHQVFGALLQYPDTHGEIRDLRPLIDHLHAQQALACVAADLLSLLLLTPPGELGADVVFGSSQRFGVPMGYGGPHAAVFASREEYKRAIPGRIIGVSKDARGNVALRMALQTREQHIRREKANSNICTAQVLLANIASFYAVYHGPEGLKRIAQRVHRLTCILAAGLERHGIQRLNQHFFDTLTLDVGGAQTAIIESAQAAQINLRILGRGQLGLSLDEACDENTVARLFDVLLGADHGLSIDDLDAETLASGIPEMLQRSTSYLRHPVFNAHHSETEMLRYLKQLENKDLALNQSMIPLGSCTMKLNATSEMIPITWPQFANLHPFVPREQAVGYTLMIEELERWLCAITGFDAICMQPNSGAQGEYAGLLAIRKYHESRQQGGRDICLIPSSAHGTNPASAQMAGMRVVIVECDDAGNVDLEDLKAKASEAGAKLSCLMATYPSTHGVYEEGISEICEVIHKHGGQVYMDGANLNAQVGLARPADIGADVSHMNLHKTFCIPHGGGGPGMGPIGVRAHLAPFVANHPVVPIDGPQPQNGAVSAAPWGSASILPISWMYIAMMGPQLADASEVAILAANYLAQHLSGAFPVLYTGRNERVAHECILDLRPLKAATGISEEDVAKRLMDYGFHAPTMSFPVPGTLMVEPTESESKAELDRFIGAMLSIRAEITEVQNGNWPAEDNPLKRAPHTMADITGVWERPYSIEQGITPDAHTKAHKYWPAVNRVDNVYGDRNLFCACVPVDDYR.

Lys707 is subject to N6-(pyridoxal phosphate)lysine.

This sequence belongs to the GcvP family. The glycine cleavage system is composed of four proteins: P, T, L and H. Requires pyridoxal 5'-phosphate as cofactor.

The catalysed reaction is N(6)-[(R)-lipoyl]-L-lysyl-[glycine-cleavage complex H protein] + glycine + H(+) = N(6)-[(R)-S(8)-aminomethyldihydrolipoyl]-L-lysyl-[glycine-cleavage complex H protein] + CO2. In terms of biological role, the glycine cleavage system catalyzes the degradation of glycine. The P protein binds the alpha-amino group of glycine through its pyridoxal phosphate cofactor; CO(2) is released and the remaining methylamine moiety is then transferred to the lipoamide cofactor of the H protein. The protein is Glycine dehydrogenase (decarboxylating) 2 of Pseudomonas fluorescens (strain Pf0-1).